A 390-amino-acid polypeptide reads, in one-letter code: Ammonium/H(+) antiporter subunit AmhT (390 aa).

Transmembrane regions (helical) follow at residues 2–22 (VIPELFSAGLILLLLFITGFV), 31–51 (VVIFILLGIAVGGLLSGSHLL), 52–72 (HFAGEVGIVLLFFMLGMEFPL), 94–114 (FGVTMAICMMMGLDVITSLII), 143–163 (FMLGLLIFEDLVAPILVAVLV), 178–198 (LLVVKVVALVAGAVILGVFLF), 212–232 (DLFILFVIGLALMYGGLALYL), 266–286 (LLLPLFFLYFGTTISFSEGIP), 288–308 (IPLLILVLVWSVIAKVIVGVL), and 351–371 (VFILASAMIGILLFQFAPSIA).

The protein belongs to the monovalent cation:proton antiporter 2 (CPA2) transporter (TC 2.A.37) family. Interacts with AmhM.

The protein resides in the cell membrane. Its activity is regulated as follows. AmhT alone exhibits antiport activity, but interaction with AmhM confers different properties, such as higher KM for potassium. Its function is as follows. Ammonium/proton antiporter that mediates the efflux of ammonium ions. Can also transport potassium or rubidium, but not sodium or lithium. This chain is Ammonium/H(+) antiporter subunit AmhT (amhT), found in Alkalihalophilus pseudofirmus (strain ATCC BAA-2126 / JCM 17055 / OF4) (Bacillus pseudofirmus).